Consider the following 223-residue polypeptide: Deoxyribose-phosphate aldolase (223 aa).

Asp91 (proton donor/acceptor) is an active-site residue. Lys154 serves as the catalytic Schiff-base intermediate with acetaldehyde. Lys183 acts as the Proton donor/acceptor in catalysis.

Belongs to the DeoC/FbaB aldolase family. DeoC type 1 subfamily.

The protein resides in the cytoplasm. It carries out the reaction 2-deoxy-D-ribose 5-phosphate = D-glyceraldehyde 3-phosphate + acetaldehyde. It participates in carbohydrate degradation; 2-deoxy-D-ribose 1-phosphate degradation; D-glyceraldehyde 3-phosphate and acetaldehyde from 2-deoxy-alpha-D-ribose 1-phosphate: step 2/2. Functionally, catalyzes a reversible aldol reaction between acetaldehyde and D-glyceraldehyde 3-phosphate to generate 2-deoxy-D-ribose 5-phosphate. The polypeptide is Deoxyribose-phosphate aldolase (Geobacillus sp. (strain WCH70)).